We begin with the raw amino-acid sequence, 231 residues long: uncharacterized protein (231 aa).

A signal peptide spans 1 to 25 (MAKWVPALLLRRVPLFSLRFRPASS). Residues 26 to 200 (TFLPVLAATE…SRPSPSATLT (175 aa)) lie on the Extracellular side of the membrane. Residues 39–64 (SVPSGDLSMPVKTRAEGEDDGFGEAG) are disordered. Residues 201–225 (LLLASSCLLAPAPPSFILLLFTLIA) form a helical membrane-spanning segment. The Cytoplasmic segment spans residues 226–231 (PDLPHS).

It localises to the membrane. This is an uncharacterized protein from Homo sapiens (Human).